A 558-amino-acid polypeptide reads, in one-letter code: MALKGQEDYIYLFKDSTHPVDFLDAFRTFYLDGLFTDITLQCPSGIIFHCHRAVLAACSNYFKAMFTADMKEKFKNKIKLSGIHHDILEGLVNYAYTSQIEITKRNVQSLLEAADLLQFLSVKKACERFLVRHLDIDNCIGMHSFAEFHVCPELEKESRRILCSKFKEVWQQEEFLEISLEKFLFILSRKNLSVWKEEAIIEPVIKWTAHDVENRIECLYNLLSYINIDIDPVYLKTALGLQRSCLLTENKIRSLIYNALNPMHKEISQRSTATMYIIGGYYWHPLSEVHIWDPLTNVWIQGAEIPDYTRESYGVTCLGPNIYVTGGYRTDNIEALDTVWIYNSESDEWTEGLPMLNARYYHCAVTLGGCVYALGGYRKGAPAEEAEFYDPLKEKWIPIANMIKGVGNATACVLHDVIYVIGGHCGYRGSCTYDKVQSYNSDINEWSLITSSPHPEYGLCSVPFENKLYLVGGQTTITECYDPEQNEWREIAPMMERRMECGAVIMNGCIYVTGGYSYSKGTYLQSIEKYDPDLNKWEIVGNLPSAMRSHGCVCVYNV.

The BTB domain maps to 36-104; that stretch reads TDITLQCPSG…AYTSQIEITK (69 aa). One can recognise a BACK domain in the interval 139–240; it reads CIGMHSFAEF…DPVYLKTALG (102 aa). Kelch repeat units lie at residues 274–320, 321–369, 370–416, 418–466, 467–508, and 510–557; these read TMYI…CLGP, NIYV…TLGG, CVYA…VLHD, IYVI…PFEN, KLYL…IMNG, and IYVT…CVYN.

The polypeptide is Kelch-like protein 23 (KLHL23) (Homo sapiens (Human)).